The following is a 145-amino-acid chain: uncharacterized protein (145 aa).

Residues 71–95 (GARGRGRTYTKGGSSRSPASWAEQG) form a disordered region.

This is an uncharacterized protein from Homo sapiens (Human).